The chain runs to 204 residues: LexA repressor (204 aa).

The H-T-H motif DNA-binding region spans R28–K48. Catalysis depends on for autocatalytic cleavage activity residues S125 and K162.

It belongs to the peptidase S24 family. As to quaternary structure, homodimer.

The enzyme catalyses Hydrolysis of Ala-|-Gly bond in repressor LexA.. Functionally, represses a number of genes involved in the response to DNA damage (SOS response), including recA and lexA. In the presence of single-stranded DNA, RecA interacts with LexA causing an autocatalytic cleavage which disrupts the DNA-binding part of LexA, leading to derepression of the SOS regulon and eventually DNA repair. The polypeptide is LexA repressor (Ectopseudomonas mendocina (strain ymp) (Pseudomonas mendocina)).